Consider the following 276-residue polypeptide: Digeranylgeranylglyceryl phosphate synthase (276 aa).

Helical transmembrane passes span 14 to 34 (VNTL…GGAV), 90 to 110 (VVLF…AVCI), 144 to 164 (FVFG…AALA), 200 to 220 (ALAV…VPYL), and 221 to 241 (VGVF…VMVV).

The protein belongs to the UbiA prenyltransferase family. DGGGP synthase subfamily. The cofactor is Mg(2+).

It localises to the cell membrane. It catalyses the reaction sn-3-O-(geranylgeranyl)glycerol 1-phosphate + (2E,6E,10E)-geranylgeranyl diphosphate = 2,3-bis-O-(geranylgeranyl)-sn-glycerol 1-phosphate + diphosphate. It functions in the pathway membrane lipid metabolism; glycerophospholipid metabolism. Prenyltransferase that catalyzes the transfer of the geranylgeranyl moiety of geranylgeranyl diphosphate (GGPP) to the C2 hydroxyl of (S)-3-O-geranylgeranylglyceryl phosphate (GGGP). This reaction is the second ether-bond-formation step in the biosynthesis of archaeal membrane lipids. This chain is Digeranylgeranylglyceryl phosphate synthase, found in Halobacterium salinarum (strain ATCC 29341 / DSM 671 / R1).